Here is a 595-residue protein sequence, read N- to C-terminus: Putative histone-lysine N-methyltransferase PRDM6 (595 aa).

Positions 27-90 are disordered; that stretch reads FPHGGAGPLK…STPASSSTSA (64 aa). Residues 30–40 are compositionally biased toward gly residues; the sequence is GGAGPLKGSGA. Residues 49 to 59 are compositionally biased toward pro residues; that stretch reads PLQPPPPPPPP. Residues 71-90 are compositionally biased toward low complexity; sequence PRPASLSSASSTPASSSTSA. Residues 246-365 enclose the SET domain; sequence REVCLCTSTV…RGTELLVWYN (120 aa). The C2H2-type 1; degenerate zinc-finger motif lies at 473 to 495; it reads WKCGQCFKTFTQRILLQMHVCTQ. C2H2-type zinc fingers lie at residues 501 to 523 and 529 to 551; these read YQCGHCSQSFSQPSELRNHVVTH and FKCGYCGRAFAGATTLNNHIRTH. Residues 557–579 form a C2H2-type 4; degenerate zinc finger; sequence FKCERCERSFTQATQLSRHQRMP.

It belongs to the class V-like SAM-binding methyltransferase superfamily. In terms of assembly, interacts with HDAC1, HDAC2, HDAC3, CBX1 and EP300.

The protein resides in the nucleus. The catalysed reaction is L-lysyl(20)-[histone H4] + S-adenosyl-L-methionine = N(6)-methyl-L-lysyl(20)-[histone H4] + S-adenosyl-L-homocysteine + H(+). Its function is as follows. Putative histone methyltransferase that acts as a transcriptional repressor of smooth muscle gene expression. Promotes the transition from differentiated to proliferative smooth muscle by suppressing differentiation and maintaining the proliferative potential of vascular smooth muscle cells. Also plays a role in endothelial cells by inhibiting endothelial cell proliferation, survival and differentiation. It is unclear whether it has histone methyltransferase activity in vivo. According to some authors, it does not act as a histone methyltransferase by itself and represses transcription by recruiting EHMT2/G9a. According to others, it possesses histone methyltransferase activity when associated with other proteins and specifically methylates 'Lys-20' of histone H4 in vitro. 'Lys-20' methylation represents a specific tag for epigenetic transcriptional repression. The sequence is that of Putative histone-lysine N-methyltransferase PRDM6 (PRDM6) from Homo sapiens (Human).